The chain runs to 429 residues: UDP-N-acetylglucosamine 1-carboxyvinyltransferase (429 aa).

Phosphoenolpyruvate is bound at residue 22–23; sequence KN. UDP-N-acetyl-alpha-D-glucosamine is bound at residue arginine 102. Catalysis depends on cysteine 126, which acts as the Proton donor. Cysteine 126 bears the 2-(S-cysteinyl)pyruvic acid O-phosphothioketal mark. Residues 131-135, aspartate 316, and isoleucine 338 contribute to the UDP-N-acetyl-alpha-D-glucosamine site; that span reads RPVDL.

This sequence belongs to the EPSP synthase family. MurA subfamily.

The protein resides in the cytoplasm. The enzyme catalyses phosphoenolpyruvate + UDP-N-acetyl-alpha-D-glucosamine = UDP-N-acetyl-3-O-(1-carboxyvinyl)-alpha-D-glucosamine + phosphate. It participates in cell wall biogenesis; peptidoglycan biosynthesis. Its function is as follows. Cell wall formation. Adds enolpyruvyl to UDP-N-acetylglucosamine. The chain is UDP-N-acetylglucosamine 1-carboxyvinyltransferase from Methylobacterium sp. (strain 4-46).